A 1466-amino-acid chain; its full sequence is ABC transporter C family member 6 (1466 aa).

Helical transmembrane passes span 16–36 (SVLSFFLNLVLLLILFGSWLF), 63–83 (LVLICCVSLSVFYSVLSLLSC), 91–111 (WPFLDLLLAALTWGSISVYLF), 128–148 (VWWVFFFVVSCYHLVVDFVLY), 158–178 (FVISDLVGVCAGLFLCCSCLW), 286–306 (IVLSALLAFVYTVSCYVAPYL), 322–339 (NQGYVLVTTFFVAKLVEC), 400–420 (WFMHDPWILVLQVSLALWILY), 425–445 (LGSIAAFPATILVMLANYPFA), and 512–532 (SVLWAAPSFISATAFGACLLL). The region spanning 286–567 (IVLSALLAFV…LPETISMIVQ (282 aa)) is the ABC transmembrane type-1 1 domain. The 224-residue stretch at 601–824 (VEISNGTFSW…GTDFMELVGA (224 aa)) folds into the ABC transporter 1 domain. ATP is bound at residue 636–643 (GTVGSGKS). A disordered region spans residues 840-876 (ASEKSTTDKENEVLHHKEKQENGSDNKPSGQLVQEEE). The span at 844 to 863 (STTDKENEVLHHKEKQENGS) shows a compositional bias: basic and acidic residues. 3 helical membrane passes run 890–910 (YMALAYGGAVIPLILVVQVLF), 937–957 (GFTLILVYVLLAVASSFCILI), and 1026–1046 (ILGIIGVIVQVAWQVLIVFIP). The ABC transmembrane type-1 2 domain maps to 900-1182 (IPLILVVQVL…LIWTLCDLEN (283 aa)). The 235-residue stretch at 1219–1453 (ITICNLQVRY…RSSLFSKLVA (235 aa)) folds into the ABC transporter 2 domain. An ATP-binding site is contributed by 1253–1260 (GRTGCGKS).

It belongs to the ABC transporter superfamily. ABCC family. Conjugate transporter (TC 3.A.1.208) subfamily. Ubiquitous.

The protein localises to the membrane. The enzyme catalyses ATP + H2O + xenobioticSide 1 = ADP + phosphate + xenobioticSide 2.. Its function is as follows. Pump for glutathione S-conjugates. The chain is ABC transporter C family member 6 (ABCC6) from Arabidopsis thaliana (Mouse-ear cress).